Consider the following 179-residue polypeptide: GTP-dependent dephospho-CoA kinase (179 aa).

Residues aspartate 55, valine 57, aspartate 74, lysine 76, and glutamate 128 each coordinate GTP.

It belongs to the GTP-dependent DPCK family.

It carries out the reaction 3'-dephospho-CoA + GTP = GDP + CoA + H(+). It participates in cofactor biosynthesis; coenzyme A biosynthesis. Functionally, catalyzes the GTP-dependent phosphorylation of the 3'-hydroxyl group of dephosphocoenzyme A to form coenzyme A (CoA). This chain is GTP-dependent dephospho-CoA kinase, found in Saccharolobus islandicus (strain M.16.27) (Sulfolobus islandicus).